The chain runs to 543 residues: Cytochrome P450 1B1 (543 aa).

Position 470 (cysteine 470) interacts with heme.

It belongs to the cytochrome P450 family. It depends on heme as a cofactor. Expressed in heart, brain, lung, skeletal muscle, kidney, spleen, thymus, prostate, testis, ovary, small intestine, colon, and peripheral blood leukocytes. Expressed in retinal endothelial cells and umbilical vein endothelial cells (at protein level).

It is found in the endoplasmic reticulum membrane. It localises to the microsome membrane. The protein resides in the mitochondrion. It catalyses the reaction an organic molecule + reduced [NADPH--hemoprotein reductase] + O2 = an alcohol + oxidized [NADPH--hemoprotein reductase] + H2O + H(+). It carries out the reaction 17beta-estradiol + reduced [NADPH--hemoprotein reductase] + O2 = 2-hydroxy-17beta-estradiol + oxidized [NADPH--hemoprotein reductase] + H2O + H(+). The enzyme catalyses 17beta-estradiol + reduced [NADPH--hemoprotein reductase] + O2 = 4-hydroxy-17beta-estradiol + oxidized [NADPH--hemoprotein reductase] + H2O + H(+). The catalysed reaction is estrone + reduced [NADPH--hemoprotein reductase] + O2 = 2-hydroxyestrone + oxidized [NADPH--hemoprotein reductase] + H2O + H(+). It catalyses the reaction estrone + reduced [NADPH--hemoprotein reductase] + O2 = 4-hydroxyestrone + oxidized [NADPH--hemoprotein reductase] + H2O + H(+). It carries out the reaction testosterone + reduced [NADPH--hemoprotein reductase] + O2 = 6beta,17beta-dihydroxyandrost-4-en-3-one + oxidized [NADPH--hemoprotein reductase] + H2O + H(+). The enzyme catalyses progesterone + reduced [NADPH--hemoprotein reductase] + O2 = 6beta-hydroxyprogesterone + oxidized [NADPH--hemoprotein reductase] + H2O + H(+). The catalysed reaction is progesterone + reduced [NADPH--hemoprotein reductase] + O2 = 16alpha-hydroxyprogesterone + oxidized [NADPH--hemoprotein reductase] + H2O + H(+). It catalyses the reaction all-trans-retinol + reduced [NADPH--hemoprotein reductase] + O2 = all-trans-retinal + oxidized [NADPH--hemoprotein reductase] + 2 H2O + H(+). It carries out the reaction all-trans-retinal + reduced [NADPH--hemoprotein reductase] + O2 = all-trans-retinoate + oxidized [NADPH--hemoprotein reductase] + H2O + 2 H(+). The enzyme catalyses (5Z,8Z,11Z,14Z)-eicosatetraenoate + reduced [NADPH--hemoprotein reductase] + O2 = (8R,9S)-epoxy-(5Z,11Z,14Z)-eicosatrienoate + oxidized [NADPH--hemoprotein reductase] + H2O + H(+). The catalysed reaction is (5Z,8Z,11Z,14Z)-eicosatetraenoate + reduced [NADPH--hemoprotein reductase] + O2 = (11R,12S)-epoxy-(5Z,8Z,14Z)-eicosatrienoate + oxidized [NADPH--hemoprotein reductase] + H2O + H(+). It catalyses the reaction (5Z,8Z,11Z,14Z)-eicosatetraenoate + reduced [NADPH--hemoprotein reductase] + O2 = (11S,12R)-epoxy-(5Z,8Z,14Z)-eicosatrienoate + oxidized [NADPH--hemoprotein reductase] + H2O + H(+). It carries out the reaction (5Z,8Z,11Z,14Z)-eicosatetraenoate + reduced [NADPH--hemoprotein reductase] + O2 = (14R,15S)-epoxy-(5Z,8Z,11Z)-eicosatrienoate + oxidized [NADPH--hemoprotein reductase] + H2O + H(+). The enzyme catalyses (5S)-hydroperoxy-(6E,8Z,11Z,14Z)-eicosatetraenoate = 5-oxo-(6E,8Z,11Z,14Z)-eicosatetraenoate + H2O. The catalysed reaction is (12S)-hydroperoxy-(5Z,8Z,10E,14Z)-eicosatetraenoate = 12-oxo-(5Z,8Z,10E,14Z)-eicosatetraenoate + H2O. It catalyses the reaction (13S)-hydroperoxy-(9Z,11E)-octadecadienoate = 13-oxo-(9Z,11E)-octadecadienoate + H2O. It carries out the reaction (15S)-hydroperoxy-(5Z,8Z,11Z,13E)-eicosatetraenoate = 15-oxo-(5Z,8Z,11Z,13E)-eicosatetraenoate + H2O. The protein operates within steroid hormone biosynthesis. It functions in the pathway cofactor metabolism; retinol metabolism. It participates in lipid metabolism; arachidonate metabolism. Its activity is regulated as follows. Enzyme activity is increased by liposomes containing anionic phospholipids, phosphatidic acid and cardiolipin. Inhibited by naringenin with an IC(50) of 5 uM. Enzyme activity is increased by cytochrome b5. Functionally, a cytochrome P450 monooxygenase involved in the metabolism of various endogenous substrates, including fatty acids, steroid hormones and vitamins. Mechanistically, uses molecular oxygen inserting one oxygen atom into a substrate, and reducing the second into a water molecule, with two electrons provided by NADPH via cytochrome P450 reductase (NADPH--hemoprotein reductase). Exhibits catalytic activity for the formation of hydroxyestrogens from estrone (E1) and 17beta-estradiol (E2), namely 2- and 4-hydroxy E1 and E2. Displays a predominant hydroxylase activity toward E2 at the C-4 position. Metabolizes testosterone and progesterone to B or D ring hydroxylated metabolites. May act as a major enzyme for all-trans retinoic acid biosynthesis in extrahepatic tissues. Catalyzes two successive oxidative transformation of all-trans retinol to all-trans retinal and then to the active form all-trans retinoic acid. Catalyzes the epoxidation of double bonds of certain PUFA. Converts arachidonic acid toward epoxyeicosatrienoic acid (EpETrE) regioisomers, 8,9-, 11,12-, and 14,15- EpETrE, that function as lipid mediators in the vascular system. Additionally, displays dehydratase activity toward oxygenated eicosanoids hydroperoxyeicosatetraenoates (HpETEs). This activity is independent of cytochrome P450 reductase, NADPH, and O2. Also involved in the oxidative metabolism of xenobiotics, particularly converting polycyclic aromatic hydrocarbons and heterocyclic aryl amines procarcinogens to DNA-damaging products. Plays an important role in retinal vascular development. Under hyperoxic O2 conditions, promotes retinal angiogenesis and capillary morphogenesis, likely by metabolizing the oxygenated products generated during the oxidative stress. Also, contributes to oxidative homeostasis and ultrastructural organization and function of trabecular meshwork tissue through modulation of POSTN expression. The sequence is that of Cytochrome P450 1B1 from Homo sapiens (Human).